A 1097-amino-acid polypeptide reads, in one-letter code: Leukemia inhibitory factor receptor (1097 aa).

The signal sequence occupies residues 1–44; the sequence is MMDIYVCLKRPSWMVDNKRMRTASNFQWLLSTFILLYLMNQVNS. At 45-833 the chain is on the extracellular side; the sequence is QKKGAPHDLK…SMYVVTKENS (789 aa). In terms of domain architecture, Fibronectin type-III 1 spans 49–138; the sequence is APHDLKCVTN…EQNVSLIPDT (90 aa). 2 disulfide bridges follow: C55–C65 and C82–C90. N-linked (GlcNAc...) asparagine glycosylation is found at N64, N85, N131, N143, N191, N243, and N303. Residues C213 and C270 are joined by a disulfide bond. Fibronectin type-III domains lie at 335–434, 435–534, 538–629, 627–719, and 724–833; these read TPQQ…VYPH, TPTS…TEAS, GPDT…IPND, PNDD…IGYI, and PIVA…KENS. Residues C341 and C351 are joined by a disulfide bond. N390, N407, N426, N445, N481, and N489 each carry an N-linked (GlcNAc...) asparagine glycan. C466 and C511 are joined by a disulfide. A WSXWS motif motif is present at residues 519–523; that stretch reads WSKWS. Residues N572, N652, N663, N680, N729, and N787 are each glycosylated (N-linked (GlcNAc...) asparagine). A helical membrane pass occupies residues 834–858; sequence VGLIIAILIPVAVAVIVGVVTSILC. Residues 859 to 1097 are Cytoplasmic-facing; sequence YRKREWIKET…TNFFQNKPND (239 aa). A Box 1 motif motif is present at residues 869 to 877; the sequence is FYPDIPNPE. Position 927 is a phosphoserine (S927). Residues 983-1005 are disordered; it reads PQAKPEEEQENDPVGGAGYKPQM. At S1044 the chain carries Phosphoserine. Positions 1066–1097 are disordered; it reads RQFLIPPKDEDSPKSNGGGWSFTNFFQNKPND. Residues 1086–1097 show a composition bias toward polar residues; it reads SFTNFFQNKPND.

It belongs to the type I cytokine receptor family. Type 2 subfamily. In terms of assembly, heterodimer composed of LIFR and IL6ST. The heterodimer formed by LIFR and IL6ST interacts with the complex formed by CNTF and CNTFR.

It localises to the cell membrane. The protein localises to the secreted. Signal-transducing molecule. May have a common pathway with IL6ST. The soluble form inhibits the biological activity of LIF by blocking its binding to receptors on target cells. The sequence is that of Leukemia inhibitory factor receptor (LIFR) from Homo sapiens (Human).